Here is a 149-residue protein sequence, read N- to C-terminus: HTH-type transcriptional regulator LrpB (149 aa).

The 62-residue stretch at 3–64 folds into the HTH asnC-type domain; that stretch reads IDSIDFQILQ…VVDELKMGFS (62 aa). A DNA-binding region (H-T-H motif) is located at residues 22 to 41; sequence WKEIGEKIHMTGQAVGNRIK.

Negative regulation of glyA transcription and kinB-dependent sporulation. The sequence is that of HTH-type transcriptional regulator LrpB (lrpB) from Bacillus subtilis (strain 168).